A 458-amino-acid polypeptide reads, in one-letter code: Monomethylamine methyltransferase MtmB (458 aa).

Position 202 (Pyl-202) is a non-standard amino acid, pyrrolysine.

This sequence belongs to the monomethylamine methyltransferase family. Can form a complex with MtmC.

The catalysed reaction is Co(I)-[methylamine-specific corrinoid protein] + methylamine + H(+) = methyl-Co(III)-[methylamine-specific corrinoid protein] + NH4(+). It functions in the pathway one-carbon metabolism; methanogenesis from methylamine. Catalyzes the transfer of the methyl group from monomethylamine to the corrinoid cofactor of MtmC. This Methanosarcina mazei (strain ATCC BAA-159 / DSM 3647 / Goe1 / Go1 / JCM 11833 / OCM 88) (Methanosarcina frisia) protein is Monomethylamine methyltransferase MtmB (mtmB1).